Reading from the N-terminus, the 112-residue chain is Prothymosin alpha (112 aa).

Methionine 1 bears the N-acetylmethionine mark. A disordered region spans residues 1 to 112 (MSDAAVDTSS…KKQKKTDEDD (112 aa)). Serine 2 carries the post-translational modification N-acetylserine; in Prothymosin alpha, N-terminally processed. Serine 2 carries the post-translational modification Phosphoserine. Position 8 is a phosphothreonine (threonine 8). Phosphoserine occurs at positions 9 and 10. Threonine 13 and threonine 14 each carry phosphothreonine. Over residues 13–31 (TTKDLKEKKEVVEEAENGR) the composition is skewed to basic and acidic residues. An N6-acetyllysine; alternate modification is found at lysine 15. Lysine 15 carries the post-translational modification N6-succinyllysine; alternate. Residues 43-84 (ENGEQEADNEVDEEEEEGGEEEEEEEEGDGEEEDGDEDEEAE) are compositionally biased toward acidic residues. Residues 101–112 (ETKKQKKTDEDD) show a composition bias toward basic and acidic residues. Position 102 is a phosphothreonine (threonine 102). At lysine 103 the chain carries N6-acetyllysine; alternate. Residue lysine 103 forms a Glycyl lysine isopeptide (Lys-Gly) (interchain with G-Cter in SUMO2); alternate linkage. The residue at position 108 (threonine 108) is a Phosphothreonine.

This sequence belongs to the pro/parathymosin family. In terms of assembly, interacts with NUPR1; regulates apoptotic process. Post-translationally, covalently linked to a small RNA of about 20 nucleotides.

It localises to the nucleus. Its function is as follows. Prothymosin alpha may mediate immune function by conferring resistance to certain opportunistic infections. The sequence is that of Prothymosin alpha (Ptma) from Rattus norvegicus (Rat).